The following is a 356-amino-acid chain: Dual-specificity RNA methyltransferase RlmN (356 aa).

Catalysis depends on Glu-89, which acts as the Proton acceptor. One can recognise a Radical SAM core domain in the interval 108 to 341 (SHARYTICVS…CTIRESKGLD (234 aa)). Cys-115 and Cys-346 are joined by a disulfide. Cys-122, Cys-126, and Cys-129 together coordinate [4Fe-4S] cluster. Residues 172–173 (GE), Ser-204, 227–229 (SLH), and Asn-303 each bind S-adenosyl-L-methionine. Cys-346 functions as the S-methylcysteine intermediate in the catalytic mechanism.

The protein belongs to the radical SAM superfamily. RlmN family. It depends on [4Fe-4S] cluster as a cofactor.

The protein localises to the cytoplasm. The catalysed reaction is adenosine(2503) in 23S rRNA + 2 reduced [2Fe-2S]-[ferredoxin] + 2 S-adenosyl-L-methionine = 2-methyladenosine(2503) in 23S rRNA + 5'-deoxyadenosine + L-methionine + 2 oxidized [2Fe-2S]-[ferredoxin] + S-adenosyl-L-homocysteine. It carries out the reaction adenosine(37) in tRNA + 2 reduced [2Fe-2S]-[ferredoxin] + 2 S-adenosyl-L-methionine = 2-methyladenosine(37) in tRNA + 5'-deoxyadenosine + L-methionine + 2 oxidized [2Fe-2S]-[ferredoxin] + S-adenosyl-L-homocysteine. In terms of biological role, specifically methylates position 2 of adenine 2503 in 23S rRNA and position 2 of adenine 37 in tRNAs. m2A2503 modification seems to play a crucial role in the proofreading step occurring at the peptidyl transferase center and thus would serve to optimize ribosomal fidelity. The chain is Dual-specificity RNA methyltransferase RlmN from Campylobacter jejuni (strain RM1221).